Reading from the N-terminus, the 246-residue chain is UDP-N-acetyl-D-mannosaminuronic acid transferase (246 aa).

The protein belongs to the glycosyltransferase 26 family.

It catalyses the reaction UDP-N-acetyl-alpha-D-mannosaminouronate + N-acetyl-alpha-D-glucosaminyl-di-trans,octa-cis-undecaprenyl diphosphate = beta-D-ManNAcA-(1-&gt;4)-alpha-D-GlcNAc-di-trans,octa-cis-undecaprenyl diphosphate + UDP + H(+). Its pathway is bacterial outer membrane biogenesis; enterobacterial common antigen biosynthesis. In terms of biological role, catalyzes the synthesis of Und-PP-GlcNAc-ManNAcA (Lipid II), the second lipid-linked intermediate involved in enterobacterial common antigen (ECA) synthesis. This chain is UDP-N-acetyl-D-mannosaminuronic acid transferase, found in Citrobacter koseri (strain ATCC BAA-895 / CDC 4225-83 / SGSC4696).